A 343-amino-acid chain; its full sequence is Anthranilate phosphoribosyltransferase (343 aa).

Residues glycine 84, 87 to 88 (GD), threonine 92, 94 to 97 (NIST), 112 to 120 (KHGNRGVSS), and serine 124 each bind 5-phospho-alpha-D-ribose 1-diphosphate. Glycine 84 contributes to the anthranilate binding site. Residue serine 96 coordinates Mg(2+). Asparagine 115 lines the anthranilate pocket. An anthranilate-binding site is contributed by arginine 170. The Mg(2+) site is built by aspartate 229 and glutamate 230.

The protein belongs to the anthranilate phosphoribosyltransferase family. Homodimer. The cofactor is Mg(2+).

The enzyme catalyses N-(5-phospho-beta-D-ribosyl)anthranilate + diphosphate = 5-phospho-alpha-D-ribose 1-diphosphate + anthranilate. Its pathway is amino-acid biosynthesis; L-tryptophan biosynthesis; L-tryptophan from chorismate: step 2/5. Catalyzes the transfer of the phosphoribosyl group of 5-phosphorylribose-1-pyrophosphate (PRPP) to anthranilate to yield N-(5'-phosphoribosyl)-anthranilate (PRA). This Burkholderia ambifaria (strain MC40-6) protein is Anthranilate phosphoribosyltransferase.